The primary structure comprises 969 residues: Proprotein convertase subtilisin/kexin type 6 (969 aa).

Over residues Met1–Arg16 the composition is skewed to pro residues. Residues Met1–Pro39 are disordered. A signal peptide spans Met1 to Ala63. A compositionally biased stretch (gly residues) spans Gly26–Pro39. Positions Pro64–Arg149 are excised as a propeptide. The region spanning Met168–Val487 is the Peptidase S8 domain. Active-site charge relay system residues include Asp205 and His246. Residue Asn259 is glycosylated (N-linked (GlcNAc...) asparagine). Residue Ser420 is the Charge relay system of the active site. Residues Ala495–His635 enclose the P/Homo B domain. The short motif at Arg553–Asp555 is the Cell attachment site element. A disordered region spans residues Glu658–Thr683. FU repeat units lie at residues Thr692–Gly739, Ala743–Ala790, Gln794–Phe838, Leu842–Pro887, and His895–Cys943. A CRM (Cys-rich motif) region spans residues Cys695–Ile930. N-linked (GlcNAc...) asparagine glycans are attached at residues Asn914 and Asn932. The PLAC domain occupies Thr931–Gly969.

It belongs to the peptidase S8 family. In terms of assembly, the PACE4A-I precursor protein seems to exist in the reticulum endoplasmic as both a monomer and a dimer-sized complex whereas mature PACE4A-I exists only as a monomer, suggesting that propeptide cleavage affects its tertiary or quaternary structure. Interacts (immature form including the propeptide) with RCN3; probably involved in the maturation and the secretion of PCSK6. Ca(2+) serves as cofactor. As to expression, each PACE4 isoform exhibits a unique restricted distribution. Isoform PACE4A-I is expressed in heart, brain, placenta, lung, skeletal muscle, kidney, pancreas, but at comparatively higher levels in the liver. Isoform PACE4A-II is at least expressed in placenta. Isoform PACE4B was only found in the embryonic kidney cell line from which it was isolated. Isoform PACE4C and isoform PACE4D are expressed in placenta. Isoform PACE4E-I is expressed in cerebellum, placenta and pituitary. Isoform PACE4E-II is at least present in cerebellum.

It is found in the secreted. Its subcellular location is the endoplasmic reticulum. The protein resides in the endomembrane system. Its function is as follows. Serine endoprotease that processes various proproteins by cleavage at paired basic amino acids, recognizing the RXXX[KR]R consensus motif. Likely functions in the constitutive secretory pathway, with unique restricted distribution in both neuroendocrine and non-neuroendocrine tissues. The sequence is that of Proprotein convertase subtilisin/kexin type 6 (PCSK6) from Homo sapiens (Human).